The following is a 202-amino-acid chain: Peptide deformylase 2 (202 aa).

Residues C120 and H162 each coordinate Fe cation. Residue E163 is part of the active site. Position 166 (H166) interacts with Fe cation.

It belongs to the polypeptide deformylase family. The cofactor is Fe(2+).

The catalysed reaction is N-terminal N-formyl-L-methionyl-[peptide] + H2O = N-terminal L-methionyl-[peptide] + formate. Removes the formyl group from the N-terminal Met of newly synthesized proteins. Requires at least a dipeptide for an efficient rate of reaction. N-terminal L-methionine is a prerequisite for activity but the enzyme has broad specificity at other positions. The chain is Peptide deformylase 2 from Rickettsia conorii (strain ATCC VR-613 / Malish 7).